Consider the following 79-residue polypeptide: UPF0180 protein BcerKBAB4_1316 (79 aa).

The protein belongs to the UPF0180 family.

The protein is UPF0180 protein BcerKBAB4_1316 of Bacillus mycoides (strain KBAB4) (Bacillus weihenstephanensis).